Reading from the N-terminus, the 256-residue chain is Imidazole glycerol phosphate synthase subunit HisF (256 aa).

Active-site residues include Asp11 and Asp130.

The protein belongs to the HisA/HisF family. As to quaternary structure, heterodimer of HisH and HisF.

It localises to the cytoplasm. The enzyme catalyses 5-[(5-phospho-1-deoxy-D-ribulos-1-ylimino)methylamino]-1-(5-phospho-beta-D-ribosyl)imidazole-4-carboxamide + L-glutamine = D-erythro-1-(imidazol-4-yl)glycerol 3-phosphate + 5-amino-1-(5-phospho-beta-D-ribosyl)imidazole-4-carboxamide + L-glutamate + H(+). It functions in the pathway amino-acid biosynthesis; L-histidine biosynthesis; L-histidine from 5-phospho-alpha-D-ribose 1-diphosphate: step 5/9. Functionally, IGPS catalyzes the conversion of PRFAR and glutamine to IGP, AICAR and glutamate. The HisF subunit catalyzes the cyclization activity that produces IGP and AICAR from PRFAR using the ammonia provided by the HisH subunit. This Cupriavidus necator (strain ATCC 17699 / DSM 428 / KCTC 22496 / NCIMB 10442 / H16 / Stanier 337) (Ralstonia eutropha) protein is Imidazole glycerol phosphate synthase subunit HisF.